The primary structure comprises 76 residues: MKLTCMVIVAVLFLTAWTFVTAITSNGLENLFPNAHHEMKNPEASKLNKRCVPYEGPCNWLTQNCCDATCVVFWCL.

A signal peptide spans 1-22 (MKLTCMVIVAVLFLTAWTFVTA). Positions 23–50 (ITSNGLENLFPNAHHEMKNPEASKLNKR) are excised as a propeptide. 3 cysteine pairs are disulfide-bonded: Cys-51-Cys-66, Cys-58-Cys-70, and Cys-65-Cys-75.

It belongs to the conotoxin O1 superfamily. As to expression, expressed by the venom duct.

The protein localises to the secreted. Its function is as follows. Omega-conotoxins act at presynaptic membranes, they bind and block voltage-gated calcium channels (Cav). The sequence is that of Omega-conotoxin-like TxO5 (TXO5) from Conus textile (Cloth-of-gold cone).